A 466-amino-acid chain; its full sequence is SVGFKAGVKDYKLTYYTPEYETKDTDILAAFRVTPQPGVPPEEAGAAVAAESSTGTWTTVWTDGLTSLDRYKGRCYHIEPVAGEESQFIAYVAYPLDLFEEGSVTNMFTSIVGNVFGFKALRALRLEDLRIPVSYVKTFQGPPHGIQVERDKLNKYGRPLLGCTIKPKLGLSAKNYGRAVYECLRGGLDFTKDDENVNSQPFMRWRDRFLFCAEAIYKAQAETGEIKGHYLNATAGTCEEMMKRAVFARELGVPIVMHDYLTGGFTANTTLAHYCRDNGLLLHIHRAMHAVIDRQKNHGIHFRVLAKALRMSGGDHIHSGTVVGKLEGERDITLGFVDLLRDDFIEKDRSRGIYFTQDWVSLPGVLPVASGGIHVWHMPALTEIFGDDSVLQFGGGTLGHPWGNAPGAVANRVALEACVQARNEGRDLAREGNEIIREASKWSPELAAACEVWKEIKFIFPAMDTL.

At Lys-5 the chain carries N6,N6,N6-trimethyllysine. Positions 114 and 164 each coordinate substrate. The Proton acceptor role is filled by Lys-166. A substrate-binding site is contributed by Lys-168. Mg(2+)-binding residues include Lys-192, Asp-194, and Glu-195. Lys-192 carries the post-translational modification N6-carboxylysine. His-285 functions as the Proton acceptor in the catalytic mechanism. Arg-286, His-318, and Ser-370 together coordinate substrate.

The protein belongs to the RuBisCO large chain family. Type I subfamily. As to quaternary structure, heterohexadecamer of 8 large chains and 8 small chains; disulfide-linked. The disulfide link is formed within the large subunit homodimers. It depends on Mg(2+) as a cofactor. Post-translationally, the disulfide bond which can form in the large chain dimeric partners within the hexadecamer appears to be associated with oxidative stress and protein turnover.

The protein resides in the plastid. The protein localises to the chloroplast. It carries out the reaction 2 (2R)-3-phosphoglycerate + 2 H(+) = D-ribulose 1,5-bisphosphate + CO2 + H2O. The enzyme catalyses D-ribulose 1,5-bisphosphate + O2 = 2-phosphoglycolate + (2R)-3-phosphoglycerate + 2 H(+). In terms of biological role, ruBisCO catalyzes two reactions: the carboxylation of D-ribulose 1,5-bisphosphate, the primary event in carbon dioxide fixation, as well as the oxidative fragmentation of the pentose substrate in the photorespiration process. Both reactions occur simultaneously and in competition at the same active site. This chain is Ribulose bisphosphate carboxylase large chain, found in Berzelia lanuginosa (Buttonbush).